A 211-amino-acid chain; its full sequence is Uracil phosphoribosyltransferase (211 aa).

Residues R78, R103, and 130–138 (DPMLATGGT) contribute to the 5-phospho-alpha-D-ribose 1-diphosphate site. Residues I195 and 200 to 202 (GDA) contribute to the uracil site. D201 provides a ligand contact to 5-phospho-alpha-D-ribose 1-diphosphate.

It belongs to the UPRTase family. It depends on Mg(2+) as a cofactor.

The catalysed reaction is UMP + diphosphate = 5-phospho-alpha-D-ribose 1-diphosphate + uracil. It functions in the pathway pyrimidine metabolism; UMP biosynthesis via salvage pathway; UMP from uracil: step 1/1. Its activity is regulated as follows. Allosterically activated by GTP. In terms of biological role, catalyzes the conversion of uracil and 5-phospho-alpha-D-ribose 1-diphosphate (PRPP) to UMP and diphosphate. This chain is Uracil phosphoribosyltransferase, found in Paenarthrobacter aurescens (strain TC1).